The following is a 292-amino-acid chain: Phosphatidylglycerol--prolipoprotein diacylglyceryl transferase (292 aa).

Transmembrane regions (helical) follow at residues 18 to 38 (LFGVTFALRWYALAYIAGLLI), 67 to 87 (LLTWVILGVILGGRLGFVLFY), and 105 to 125 (GGMSFHGGFLGVMTALVAFCL). Arginine 150 is an a 1,2-diacyl-sn-glycero-3-phospho-(1'-sn-glycerol) binding site. Transmembrane regions (helical) follow at residues 193–213 (QIYEAGLEGILLFAVLSLLVW), 222–242 (GSVSGMFLAGYGATRFLVEFV), and 266–286 (GLTMGQILSLPMILLGLYLIL).

This sequence belongs to the Lgt family.

It localises to the cell inner membrane. The catalysed reaction is L-cysteinyl-[prolipoprotein] + a 1,2-diacyl-sn-glycero-3-phospho-(1'-sn-glycerol) = an S-1,2-diacyl-sn-glyceryl-L-cysteinyl-[prolipoprotein] + sn-glycerol 1-phosphate + H(+). It functions in the pathway protein modification; lipoprotein biosynthesis (diacylglyceryl transfer). In terms of biological role, catalyzes the transfer of the diacylglyceryl group from phosphatidylglycerol to the sulfhydryl group of the N-terminal cysteine of a prolipoprotein, the first step in the formation of mature lipoproteins. The protein is Phosphatidylglycerol--prolipoprotein diacylglyceryl transferase of Cereibacter sphaeroides (strain ATCC 17029 / ATH 2.4.9) (Rhodobacter sphaeroides).